The chain runs to 124 residues: Insulin growth factor-like family member 4 (124 aa).

The first 19 residues, 1–19, serve as a signal peptide directing secretion; it reads MVPRISAAIFIFELLGSNS. Residues Asn-57 and Asn-84 are each glycosylated (N-linked (GlcNAc...) asparagine).

This sequence belongs to the IGFL family. In terms of tissue distribution, detected in the cerebellum.

It localises to the secreted. This Homo sapiens (Human) protein is Insulin growth factor-like family member 4 (IGFL4).